The sequence spans 339 residues: Ketol-acid reductoisomerase (NADP(+)) (339 aa).

Residues 1-182 (MRVYYDRDAD…GGGRSGVIET (182 aa)) form the KARI N-terminal Rossmann domain. NADP(+) contacts are provided by residues 24-27 (YGSQ), arginine 48, serine 51, threonine 53, and 83-86 (DELQ). Histidine 108 is an active-site residue. Glycine 134 contributes to the NADP(+) binding site. In terms of domain architecture, KARI C-terminal knotted spans 183 to 328 (TFKEECETDL…GKLRAMMPWI (146 aa)). Residues aspartate 191, glutamate 195, glutamate 227, and glutamate 231 each coordinate Mg(2+). Serine 252 lines the substrate pocket.

It belongs to the ketol-acid reductoisomerase family. The cofactor is Mg(2+).

The enzyme catalyses (2R)-2,3-dihydroxy-3-methylbutanoate + NADP(+) = (2S)-2-acetolactate + NADPH + H(+). It carries out the reaction (2R,3R)-2,3-dihydroxy-3-methylpentanoate + NADP(+) = (S)-2-ethyl-2-hydroxy-3-oxobutanoate + NADPH + H(+). It functions in the pathway amino-acid biosynthesis; L-isoleucine biosynthesis; L-isoleucine from 2-oxobutanoate: step 2/4. It participates in amino-acid biosynthesis; L-valine biosynthesis; L-valine from pyruvate: step 2/4. Involved in the biosynthesis of branched-chain amino acids (BCAA). Catalyzes an alkyl-migration followed by a ketol-acid reduction of (S)-2-acetolactate (S2AL) to yield (R)-2,3-dihydroxy-isovalerate. In the isomerase reaction, S2AL is rearranged via a Mg-dependent methyl migration to produce 3-hydroxy-3-methyl-2-ketobutyrate (HMKB). In the reductase reaction, this 2-ketoacid undergoes a metal-dependent reduction by NADPH to yield (R)-2,3-dihydroxy-isovalerate. This is Ketol-acid reductoisomerase (NADP(+)) from Brucella melitensis biotype 2 (strain ATCC 23457).